We begin with the raw amino-acid sequence, 286 residues long: Phosphoribosylaminoimidazole-succinocarboxamide synthase (286 aa).

The protein belongs to the SAICAR synthetase family.

The catalysed reaction is 5-amino-1-(5-phospho-D-ribosyl)imidazole-4-carboxylate + L-aspartate + ATP = (2S)-2-[5-amino-1-(5-phospho-beta-D-ribosyl)imidazole-4-carboxamido]succinate + ADP + phosphate + 2 H(+). Its pathway is purine metabolism; IMP biosynthesis via de novo pathway; 5-amino-1-(5-phospho-D-ribosyl)imidazole-4-carboxamide from 5-amino-1-(5-phospho-D-ribosyl)imidazole-4-carboxylate: step 1/2. The sequence is that of Phosphoribosylaminoimidazole-succinocarboxamide synthase from Mannheimia succiniciproducens (strain KCTC 0769BP / MBEL55E).